A 194-amino-acid polypeptide reads, in one-letter code: Peptidyl-tRNA hydrolase (194 aa).

Tyr-17 serves as a coordination point for tRNA. The Proton acceptor role is filled by His-22. Residues Phe-68, Asn-70, and Asn-116 each contribute to the tRNA site.

Belongs to the PTH family. Monomer.

It is found in the cytoplasm. The catalysed reaction is an N-acyl-L-alpha-aminoacyl-tRNA + H2O = an N-acyl-L-amino acid + a tRNA + H(+). Its function is as follows. Hydrolyzes ribosome-free peptidyl-tRNAs (with 1 or more amino acids incorporated), which drop off the ribosome during protein synthesis, or as a result of ribosome stalling. In terms of biological role, catalyzes the release of premature peptidyl moieties from peptidyl-tRNA molecules trapped in stalled 50S ribosomal subunits, and thus maintains levels of free tRNAs and 50S ribosomes. This is Peptidyl-tRNA hydrolase from Actinobacillus pleuropneumoniae serotype 5b (strain L20).